Consider the following 667-residue polypeptide: Zeaxanthin epoxidase, chloroplastic (667 aa).

Residues M1–K59 constitute a chloroplast transit peptide. FAD is bound by residues R82 to E110 and G360 to D373. Residues C558 to G612 enclose the FHA domain.

FAD is required as a cofactor. In terms of tissue distribution, expressed in leaves, stems and flowers, and at lower levels in roots and siliques.

The protein localises to the plastid. It is found in the chloroplast. It carries out the reaction all-trans-zeaxanthin + 4 reduced [2Fe-2S]-[ferredoxin] + 2 O2 + 4 H(+) = all-trans-violaxanthin + 4 oxidized [2Fe-2S]-[ferredoxin] + 2 H2O. Its pathway is plant hormone biosynthesis; abscisate biosynthesis. Zeaxanthin epoxidase that plays an important role in the xanthophyll cycle and abscisic acid (ABA) biosynthesis. Converts zeaxanthin into antheraxanthin and subsequently violaxanthin. Required for resistance to osmotic and drought stresses, ABA-dependent stomatal closure, seed development and dormancy, modulation of defense gene expression and disease resistance and non-photochemical quencing (NPQ). Through its role in ABA biosynthesis, regulates the expression of stress-responsive genes such as RD29A during osmotic stress and is required for normal plant growth during vegetative development. Is required for late skotomorphogenic growth through its role in the xanthophyll carotenoids neoxanthin, violaxanthin and antheraxanthin biosynthesis. Required for beta-aminobutyric acid (BABA)-induced priming in disease resistance, tolerance to salt and drought stresses and sterility. Participates in NPQ by regulating the level of zeaxanthin in photosynthetic energy conversion. NPQ is a process that maintains the balance between dissipation and utilization of light energy to minimize the generation of oxidizing molecules and the molecular damages they can generate. The polypeptide is Zeaxanthin epoxidase, chloroplastic (ZEP) (Arabidopsis thaliana (Mouse-ear cress)).